The primary structure comprises 233 residues: Large ribosomal subunit protein uL1 (233 aa).

It belongs to the universal ribosomal protein uL1 family. As to quaternary structure, part of the 50S ribosomal subunit.

Binds directly to 23S rRNA. The L1 stalk is quite mobile in the ribosome, and is involved in E site tRNA release. In terms of biological role, protein L1 is also a translational repressor protein, it controls the translation of the L11 operon by binding to its mRNA. The protein is Large ribosomal subunit protein uL1 of Rhodospirillum rubrum (strain ATCC 11170 / ATH 1.1.1 / DSM 467 / LMG 4362 / NCIMB 8255 / S1).